Here is a 258-residue protein sequence, read N- to C-terminus: Phosphoprotein ECPP44 (258 aa).

3 disordered regions span residues 1–25 (MASD…DRGL), 46–131 (EKVQ…PVEV), and 148–175 (KLPG…VDCA). Basic and acidic residues-rich tracts occupy residues 11 to 25 (SVEK…DRGL), 46 to 80 (EKVQ…EKLH), 109 to 124 (GLKE…KEED), and 148 to 158 (KLPGGGKKVEE).

It belongs to the plant dehydrin family. Post-translationally, phosphorylated in embryogenic and somatic embryos. Not phosphorylated in non-embryogenic cells.

In terms of biological role, phosphorylation of ECCP44 protein is thought to be involved in the acquisition of embryogenic competence. Unlike other dehydrins, it is not thought to function as an environmental stress tolerant. The sequence is that of Phosphoprotein ECPP44 (ECPP44) from Daucus carota (Wild carrot).